A 407-amino-acid chain; its full sequence is Na(+)-translocating NADH-quinone reductase subunit F (407 aa).

A helical transmembrane segment spans residues 3–23; that stretch reads ITLGIAMFTVIVLALAVIILF. Residues 32–126 enclose the 2Fe-2S ferredoxin-type domain; the sequence is GDITIEINDD…SMKVELPEEV (95 aa). Residues cysteine 69, cysteine 75, cysteine 78, and cysteine 110 each contribute to the [2Fe-2S] cluster site. Positions 129 to 269 constitute an FAD-binding FR-type domain; sequence VKKWECTVIS…SGPFGEFFAK (141 aa). The interval 272–389 is catalytic; sequence DAEMVFVGGG…PIMNASVIKM (118 aa).

The protein belongs to the NqrF family. Composed of six subunits; NqrA, NqrB, NqrC, NqrD, NqrE and NqrF. [2Fe-2S] cluster is required as a cofactor. The cofactor is FAD.

Its subcellular location is the cell inner membrane. It carries out the reaction a ubiquinone + n Na(+)(in) + NADH + H(+) = a ubiquinol + n Na(+)(out) + NAD(+). Its function is as follows. NQR complex catalyzes the reduction of ubiquinone-1 to ubiquinol by two successive reactions, coupled with the transport of Na(+) ions from the cytoplasm to the periplasm. The first step is catalyzed by NqrF, which accepts electrons from NADH and reduces ubiquinone-1 to ubisemiquinone by a one-electron transfer pathway. The protein is Na(+)-translocating NADH-quinone reductase subunit F of Pasteurella multocida (strain Pm70).